The following is a 574-amino-acid chain: Tyrosinase (574 aa).

Residues H67, H95, H104, H275, H279, and H304 each contribute to the Cu cation site. The segment at residues 93-95 (CTH) is a cross-link (2'-(S-cysteinyl)-histidine (Cys-His)).

It belongs to the tyrosinase family. The cofactor is Cu(2+).

The catalysed reaction is 2 L-dopa + O2 = 2 L-dopaquinone + 2 H2O. The enzyme catalyses L-tyrosine + O2 = L-dopaquinone + H2O. Functionally, this is a copper-containing oxidase that functions in the formation of pigments such as melanins and other polyphenolic compounds. The polypeptide is Tyrosinase (TYR) (Podospora anserina (Pleurage anserina)).